A 286-amino-acid chain; its full sequence is Ribosomal RNA small subunit methyltransferase H (286 aa).

Residues 25 to 27 (GGH), D45, L79, D93, and Q100 contribute to the S-adenosyl-L-methionine site.

This sequence belongs to the methyltransferase superfamily. RsmH family.

It localises to the cytoplasm. The enzyme catalyses cytidine(1402) in 16S rRNA + S-adenosyl-L-methionine = N(4)-methylcytidine(1402) in 16S rRNA + S-adenosyl-L-homocysteine + H(+). Specifically methylates the N4 position of cytidine in position 1402 (C1402) of 16S rRNA. The protein is Ribosomal RNA small subunit methyltransferase H of Petrotoga mobilis (strain DSM 10674 / SJ95).